The sequence spans 488 residues: MHAGAFINFVWALSLVSLLAAVPPSPSFSLKNLPSTACRLPPAVSEKRCRTPDGSICSGRGSCDCGICLCEVKEAGKYYGPLCECHDWVCHTYDGQVCAGHGQCDCGVCKCDVGWSGEACQYPTTCDLTRKKSNEMCKNSQAVICSNAGTCQCGRCKCENSDNSGLIYGKYCECDDTECFDDETQEICGGHGKCYCGNCYCEAGWHGDKCEFQCDITPWEIKKRCTSPDGKICSNRGTCVCGECTCHDVDPTGDWGDIHGDTCECDERNCKSVYDRYSDDFCSGHGQCNCGRCDCKDGWTGRKCEHPRACALSIEESKKKCQGSASQPCSGRGKCECGQCTCFPPGDSKVYGKNCECDDRQCEDLEGKICGEHGTCSCGRCICEAGWFGKLCQHERKCNMTEEESKSQCESDDGILCSGKGSCHCGKCICSPQEWYVSGEFCECDDRDCDKHDGLICTGNGICNCGNCECWEGWNGNACEIWLGSEYP.

The first 21 residues, 1-21, serve as a signal peptide directing secretion; that stretch reads MHAGAFINFVWALSLVSLLAA. Cystine bridges form between Cys38–Cys65, Cys49–Cys63, Cys57–Cys68, Cys70–Cys83, Cys85–Cys106, Cys90–Cys104, Cys98–Cys109, Cys111–Cys120, Cys126–Cys153, Cys137–Cys151, Cys145–Cys156, Cys158–Cys172, Cys174–Cys196, Cys179–Cys194, Cys188–Cys199, Cys201–Cys210, Cys214–Cys241, Cys225–Cys239, Cys233–Cys244, Cys246–Cys263, Cys265–Cys290, Cys270–Cys288, Cys282–Cys293, Cys295–Cys304, Cys310–Cys337, Cys321–Cys335, Cys329–Cys340, Cys342–Cys355, Cys357–Cys378, Cys362–Cys376, Cys370–Cys381, Cys383–Cys392, Cys398–Cys425, Cys409–Cys423, Cys417–Cys428, Cys430–Cys442, Cys444–Cys465, Cys449–Cys463, Cys457–Cys468, and Cys470–Cys479. 10 I-EGF domains span residues 38–84, 85–121, 126–173, 174–211, 214–264, 265–305, 310–356, 357–393, 398–443, and 444–480; these read CRLP…PLCE, CHDWVCHTYDGQVCAGHGQCDCGVCKCDVGWSGEACQ, CDLT…KYCE, CDDTECFDDETQEICGGHGKCYCGNCYCEAGWHGDKCE, CDIT…DTCE, CDER…RKCE, CALS…KNCE, CDDRQCEDLEGKICGEHGTCSCGRCICEAGWFGKLCQ, CNMT…EFCE, and CDDRDCDKHDGLICTGNGICNCGNCECWEGWNGNACE. The stretch at 49–89 is one I repeat; that stretch reads CRTPDGSICSGRGSCDCGICLCEVKEAGKYYGPLCECHDWV. The tract at residues 49–488 is cysteine-rich tandem repeats; it reads CRTPDGSICS…CEIWLGSEYP (440 aa). An II repeat occupies 90 to 136; sequence CHTYDGQVCAGHGQCDCGVCKCDVGWSGEACQYPTTCDLTRKKSNEM. The stretch at 137–178 is one III repeat; the sequence is CKNSQAVICSNAGTCQCGRCKCENSDNSGLIYGKYCECDDTE. An IV repeat occupies 179–224; that stretch reads CFDDETQEICGGHGKCYCGNCYCEAGWHGDKCEFQCDITPWEIKKR. The stretch at 225–269 is one V repeat; the sequence is CTSPDGKICSNRGTCVCGECTCHDVDPTGDWGDIHGDTCECDERN. Residues 270–320 form a VI repeat; it reads CKSVYDRYSDDFCSGHGQCNCGRCDCKDGWTGRKCEHPRACALSIEESKKK. The VII repeat unit spans residues 321 to 361; sequence CQGSASQPCSGRGKCECGQCTCFPPGDSKVYGKNCECDDRQ. Residues 362–408 form a VIII repeat; the sequence is CEDLEGKICGEHGTCSCGRCICEAGWFGKLCQHERKCNMTEEESKSQ. Residue Asn399 is glycosylated (N-linked (GlcNAc...) asparagine). An IX repeat occupies 409-448; that stretch reads CESDDGILCSGKGSCHCGKCICSPQEWYVSGEFCECDDRD. The X repeat unit spans residues 449–488; the sequence is CDKHDGLICTGNGICNCGNCECWEGWNGNACEIWLGSEYP.

The protein resides in the secreted. In Xenopus laevis (African clawed frog), this protein is Integrin beta-like protein 1 (itgbl1).